A 281-amino-acid polypeptide reads, in one-letter code: Leukocyte antigen CD37 (281 aa).

Over methionine 1–valine 17 the chain is Cytoplasmic. Residues phenylalanine 18 to isoleucine 38 form a helical membrane-spanning segment. The Extracellular portion of the chain corresponds to aspartate 39–lysine 59. The chain crosses the membrane as a helical span at residues valine 60–leucine 74. Topologically, residues glycine 75 to cysteine 85 are cytoplasmic. Residues leucine 86–glutamine 111 form a helical membrane-spanning segment. Residues arginine 112–asparagine 241 lie on the Extracellular side of the membrane. N-linked (GlcNAc...) asparagine glycosylation is found at asparagine 170, asparagine 183, and asparagine 188. A helical membrane pass occupies residues isoleucine 242 to leucine 266. The Cytoplasmic portion of the chain corresponds to cysteine 267–arginine 281.

The protein belongs to the tetraspanin (TM4SF) family. In terms of assembly, interacts with SCIMP. Interacts with SOCS3. Interacts with DECTIN1/CLEC7A. In terms of processing, tyrosine phosphorylated; leading to activation of downstream signaling pathways.

It is found in the cell membrane. Its function is as follows. Structural component of specialized membrane microdomains known as tetraspanin-enriched microdomains (TERMs), which act as platforms for receptor clustering and signaling. Participates thereby in diverse biological functions such as cell signal transduction, adhesion, migration and protein trafficking. Upon ligand binding, two signaling pathways are activated, one acting through phosphorylation by LYN leading to cell death or a survival pathway with activation of GSK3B. Plays an essential role for clustering of integrin ITGA4/ITGB1 and promotes its mobility in the plasma membrane of B-cells. In turn, participates in ITGA4/ITGB1 integrin-mediated antiapoptotic signaling through AKT. Also plays a role in the migration of dendritic cells and neutrophils to draining lymph nodes, as well as in their integrin-mediated adhesion. Negatively regulates IL-6 responses through direct interaction with SOCS3 thereby preventing constitutive IL-6 signaling. Alternatively, inhibition of IL-6 signaling can also occur via interaction and stabilization of DECTIN1/CLEC7A at the cell membrane to inhibit its ability to promote the production of IL-6. This Mus musculus (Mouse) protein is Leukocyte antigen CD37 (Cd37).